The sequence spans 285 residues: Aspartate/glutamate leucyltransferase (285 aa).

Belongs to the R-transferase family. Bpt subfamily.

The protein localises to the cytoplasm. It carries out the reaction N-terminal L-glutamyl-[protein] + L-leucyl-tRNA(Leu) = N-terminal L-leucyl-L-glutamyl-[protein] + tRNA(Leu) + H(+). It catalyses the reaction N-terminal L-aspartyl-[protein] + L-leucyl-tRNA(Leu) = N-terminal L-leucyl-L-aspartyl-[protein] + tRNA(Leu) + H(+). In terms of biological role, functions in the N-end rule pathway of protein degradation where it conjugates Leu from its aminoacyl-tRNA to the N-termini of proteins containing an N-terminal aspartate or glutamate. In Dinoroseobacter shibae (strain DSM 16493 / NCIMB 14021 / DFL 12), this protein is Aspartate/glutamate leucyltransferase.